The following is a 171-amino-acid chain: Disulfide bond formation protein B (171 aa).

At Met1–Val8 the chain is on the cytoplasmic side. Residues Ser9–Tyr25 traverse the membrane as a helical segment. The Periplasmic portion of the chain corresponds to Leu26–Val43. Cys35 and Cys38 form a disulfide bridge. Residues Gly44–Pro60 form a helical membrane-spanning segment. The Cytoplasmic segment spans residues Val61–Arg67. Residues Phe68–Gly85 traverse the membrane as a helical segment. The Periplasmic segment spans residues Arg86 to Val142. The cysteines at positions 101 and 128 are disulfide-linked. A helical transmembrane segment spans residues Trp143 to Arg161. At Phe162–Lys171 the chain is on the cytoplasmic side.

The protein belongs to the DsbB family.

It localises to the cell inner membrane. Its function is as follows. Required for disulfide bond formation in some periplasmic proteins. Acts by oxidizing the DsbA protein. This is Disulfide bond formation protein B from Acinetobacter baumannii (strain ATCC 17978 / DSM 105126 / CIP 53.77 / LMG 1025 / NCDC KC755 / 5377).